The following is a 124-amino-acid chain: uncharacterized protein (124 aa).

This is an uncharacterized protein from Lactobacillus acidophilus.